Reading from the N-terminus, the 482-residue chain is UDP-N-acetylmuramate--L-alanine ligase (482 aa).

123–129 is a binding site for ATP; the sequence is GTHGKTT.

The protein belongs to the MurCDEF family.

It localises to the cytoplasm. It catalyses the reaction UDP-N-acetyl-alpha-D-muramate + L-alanine + ATP = UDP-N-acetyl-alpha-D-muramoyl-L-alanine + ADP + phosphate + H(+). The protein operates within cell wall biogenesis; peptidoglycan biosynthesis. In terms of biological role, cell wall formation. This is UDP-N-acetylmuramate--L-alanine ligase from Pseudomonas putida (strain W619).